The chain runs to 29 residues: Brevinin-2Rd (29 aa).

Cysteines 23 and 29 form a disulfide.

As to expression, expressed by the skin glands.

It localises to the secreted. Its function is as follows. Antimicrobial peptide. The polypeptide is Brevinin-2Rd (Pelophylax ridibundus (Marsh frog)).